The chain runs to 374 residues: tRNA-specific 2-thiouridylase MnmA (374 aa).

Residues 17 to 24 and M43 contribute to the ATP site; that span reads GMSGGVDS. The interval 103 to 105 is interaction with target base in tRNA; the sequence is NPD. C108 (nucleophile) is an active-site residue. Cysteines 108 and 204 form a disulfide. Residue G132 participates in ATP binding. An interaction with tRNA region spans residues 154-156; that stretch reads KDQ. C204 serves as the catalytic Cysteine persulfide intermediate. Positions 316–317 are interaction with tRNA; sequence RY.

The protein belongs to the MnmA/TRMU family.

It is found in the cytoplasm. It catalyses the reaction S-sulfanyl-L-cysteinyl-[protein] + uridine(34) in tRNA + AH2 + ATP = 2-thiouridine(34) in tRNA + L-cysteinyl-[protein] + A + AMP + diphosphate + H(+). Its function is as follows. Catalyzes the 2-thiolation of uridine at the wobble position (U34) of tRNA, leading to the formation of s(2)U34. This Pseudomonas putida (strain W619) protein is tRNA-specific 2-thiouridylase MnmA.